The sequence spans 109 residues: UPF0122 protein ABC2295 (109 aa).

This sequence belongs to the UPF0122 family.

Its function is as follows. Might take part in the signal recognition particle (SRP) pathway. This is inferred from the conservation of its genetic proximity to ftsY/ffh. May be a regulatory protein. In Shouchella clausii (strain KSM-K16) (Alkalihalobacillus clausii), this protein is UPF0122 protein ABC2295.